The chain runs to 201 residues: HTH-type transcriptional regulator Hpr (201 aa).

Residues 13-157 enclose the HTH marR-type domain; it reads AMLFSQRIAQ…MMCIIRNIYG (145 aa). A DNA-binding region (H-T-H motif) is located at residues 63-86; that stretch reads ISEIAKFGVMHVSTAFNFSKKLEE.

In terms of assembly, homodimer.

Functionally, negative regulator of protease production and sporulation. The chain is HTH-type transcriptional regulator Hpr from Geobacillus sp. (strain WCH70).